The following is an 876-amino-acid chain: Alanine--tRNA ligase (876 aa).

His568, His572, Cys670, and His674 together coordinate Zn(2+).

Belongs to the class-II aminoacyl-tRNA synthetase family. Zn(2+) serves as cofactor.

It localises to the cytoplasm. It catalyses the reaction tRNA(Ala) + L-alanine + ATP = L-alanyl-tRNA(Ala) + AMP + diphosphate. Functionally, catalyzes the attachment of alanine to tRNA(Ala) in a two-step reaction: alanine is first activated by ATP to form Ala-AMP and then transferred to the acceptor end of tRNA(Ala). Also edits incorrectly charged Ser-tRNA(Ala) and Gly-tRNA(Ala) via its editing domain. This Anaplasma phagocytophilum (strain HZ) protein is Alanine--tRNA ligase.